Reading from the N-terminus, the 232-residue chain is 5'-methylthioadenosine/S-adenosylhomocysteine nucleosidase (232 aa).

The Proton acceptor role is filled by Glu-12. Substrate contacts are provided by residues Gly-78, Ile-152, and 173–174; that span reads ME. Asp-197 functions as the Proton donor in the catalytic mechanism.

It belongs to the PNP/UDP phosphorylase family. MtnN subfamily. As to quaternary structure, homodimer.

The catalysed reaction is S-adenosyl-L-homocysteine + H2O = S-(5-deoxy-D-ribos-5-yl)-L-homocysteine + adenine. The enzyme catalyses S-methyl-5'-thioadenosine + H2O = 5-(methylsulfanyl)-D-ribose + adenine. It catalyses the reaction 5'-deoxyadenosine + H2O = 5-deoxy-D-ribose + adenine. It participates in amino-acid biosynthesis; L-methionine biosynthesis via salvage pathway; S-methyl-5-thio-alpha-D-ribose 1-phosphate from S-methyl-5'-thioadenosine (hydrolase route): step 1/2. Functionally, catalyzes the irreversible cleavage of the glycosidic bond in both 5'-methylthioadenosine (MTA) and S-adenosylhomocysteine (SAH/AdoHcy) to adenine and the corresponding thioribose, 5'-methylthioribose and S-ribosylhomocysteine, respectively. Also cleaves 5'-deoxyadenosine, a toxic by-product of radical S-adenosylmethionine (SAM) enzymes, into 5-deoxyribose and adenine. Thus, is required for in vivo function of the radical SAM enzymes biotin synthase and lipoic acid synthase, that are inhibited by 5'-deoxyadenosine accumulation. The polypeptide is 5'-methylthioadenosine/S-adenosylhomocysteine nucleosidase (Edwardsiella ictaluri (strain 93-146)).